Here is a 444-residue protein sequence, read N- to C-terminus: Tubulin beta-8 chain (444 aa).

The MREI motif signature appears at 1–4 (MREI). Glutamine 11, glutamate 69, serine 138, glycine 142, threonine 143, and glycine 144 together coordinate GTP. Glutamate 69 contributes to the Mg(2+) binding site. A Phosphoserine; by CDK1 modification is found at serine 172. GTP contacts are provided by asparagine 204 and asparagine 226. Glutamate 436 is modified (5-glutamyl polyglutamate).

The protein belongs to the tubulin family. As to quaternary structure, dimer of alpha and beta chains. A typical microtubule is a hollow water-filled tube with an outer diameter of 25 nm and an inner diameter of 15 nM. Alpha-beta heterodimers associate head-to-tail to form protofilaments running lengthwise along the microtubule wall with the beta-tubulin subunit facing the microtubule plus end conferring a structural polarity. Microtubules usually have 13 protofilaments but different protofilament numbers can be found in some organisms and specialized cells. Mg(2+) serves as cofactor. Some glutamate residues at the C-terminus are polyglycylated, resulting in polyglycine chains on the gamma-carboxyl group. Glycylation is mainly limited to tubulin incorporated into axonemes (cilia and flagella) whereas glutamylation is prevalent in neuronal cells, centrioles, axonemes, and the mitotic spindle. Both modifications can coexist on the same protein on adjacent residues, and lowering polyglycylation levels increases polyglutamylation, and reciprocally. Cilia and flagella glycylation is required for their stability and maintenance. Flagella glycylation controls sperm motility. In terms of processing, some glutamate residues at the C-terminus are polyglutamylated, resulting in polyglutamate chains on the gamma-carboxyl group. Polyglutamylation plays a key role in microtubule severing by spastin (SPAST). SPAST preferentially recognizes and acts on microtubules decorated with short polyglutamate tails: severing activity by SPAST increases as the number of glutamates per tubulin rises from one to eight, but decreases beyond this glutamylation threshold. Glutamylation is also involved in cilia motility. Post-translationally, phosphorylated on Ser-172 by CDK1 during the cell cycle, from metaphase to telophase, but not in interphase. This phosphorylation inhibits tubulin incorporation into microtubules.

It localises to the cytoplasm. The protein localises to the cytoskeleton. Its subcellular location is the spindle. In terms of biological role, tubulin is the major constituent of microtubules, a cylinder consisting of laterally associated linear protofilaments composed of alpha- and beta-tubulin heterodimers. Microtubules grow by the addition of GTP-tubulin dimers to the microtubule end, where a stabilizing cap forms. Below the cap, tubulin dimers are in GDP-bound state, owing to GTPase activity of alpha-tubulin. Has a key role in meiotic spindle assembly and oocyte maturation. This chain is Tubulin beta-8 chain (TUBB8), found in Papio hamadryas (Hamadryas baboon).